Here is a 123-residue protein sequence, read N- to C-terminus: uncharacterized protein (123 aa).

The N-terminal stretch at 1–20 is a signal peptide; that stretch reads MSPLIVGTLIIILLSGLATA. The GPI-anchor amidated glycine moiety is linked to residue Gly-96. Residues 97-123 constitute a propeptide, removed in mature form; that stretch reads SSPTTKRVIYIVMILLVLITLAVNLKH.

The protein resides in the cell membrane. This is an uncharacterized protein from Schizosaccharomyces pombe (strain 972 / ATCC 24843) (Fission yeast).